We begin with the raw amino-acid sequence, 59 residues long: MAVQQNKKSPSKRGMHRSHDFLTAAPLAVEPSTGEVHLRHHVSPNGYYRGKKVVKTKND.

Disordered stretches follow at residues 1–23 (MAVQQNKKSPSKRGMHRSHDFLT) and 35–59 (EVHLRHHVSPNGYYRGKKVVKTKND). Over residues 49–59 (RGKKVVKTKND) the composition is skewed to basic residues.

This sequence belongs to the bacterial ribosomal protein bL32 family.

In Burkholderia ambifaria (strain MC40-6), this protein is Large ribosomal subunit protein bL32.